A 156-amino-acid polypeptide reads, in one-letter code: Protein-export protein SecB (156 aa).

The protein belongs to the SecB family. As to quaternary structure, homotetramer, a dimer of dimers. One homotetramer interacts with 1 SecA dimer.

The protein localises to the cytoplasm. In terms of biological role, one of the proteins required for the normal export of preproteins out of the cell cytoplasm. It is a molecular chaperone that binds to a subset of precursor proteins, maintaining them in a translocation-competent state. It also specifically binds to its receptor SecA. In Yersinia enterocolitica serotype O:8 / biotype 1B (strain NCTC 13174 / 8081), this protein is Protein-export protein SecB.